Consider the following 77-residue polypeptide: U10-lycotoxin-Ls1b (77 aa).

The signal sequence occupies residues 1–20; it reads MKLIIFTGLVLFAIVSLIEA. Positions 21 to 26 are excised as a propeptide; that stretch reads EEESGR.

It belongs to the neurotoxin 19 (CSTX) family. 09 (U10-Lctx) subfamily. Contains 4 disulfide bonds. In terms of tissue distribution, expressed by the venom gland.

Its subcellular location is the secreted. The protein is U10-lycotoxin-Ls1b of Lycosa singoriensis (Wolf spider).